Here is a 238-residue protein sequence, read N- to C-terminus: MLFPTPLISGRLERRYKRFLADVTLDDGRFITASVPNTGSMLGLTAPGSRVWLSFSDAPHRKYAHTLQIVEADNTLVGVNTGLPNRIAEEAILKGLIPDLDGYATLKREQKYGRNSRIDLLLDDGPRPRAYVEVKNVHFIRTPGLAEFPDTVTARGAKHLDELVDVVAAGHRGIMLFIIQRADCSRFGISGDLDPFYARAFERAIASGVEAWAVRCHITENGIDATELVPIEDMRRIE.

The protein belongs to the SfsA family.

The chain is Sugar fermentation stimulation protein homolog from Brucella abortus (strain S19).